A 242-amino-acid chain; its full sequence is Pyridoxine 5'-phosphate synthase (242 aa).

Residue asparagine 8 coordinates 3-amino-2-oxopropyl phosphate. Residue 10 to 11 coordinates 1-deoxy-D-xylulose 5-phosphate; it reads DH. Arginine 19 lines the 3-amino-2-oxopropyl phosphate pocket. Catalysis depends on histidine 44, which acts as the Proton acceptor. Residues arginine 46 and histidine 51 each coordinate 1-deoxy-D-xylulose 5-phosphate. Glutamate 71 acts as the Proton acceptor in catalysis. Residue threonine 101 participates in 1-deoxy-D-xylulose 5-phosphate binding. Histidine 193 functions as the Proton donor in the catalytic mechanism. 3-amino-2-oxopropyl phosphate contacts are provided by residues glycine 194 and 215–216; that span reads GF.

It belongs to the PNP synthase family. As to quaternary structure, homooctamer; tetramer of dimers.

It localises to the cytoplasm. The catalysed reaction is 3-amino-2-oxopropyl phosphate + 1-deoxy-D-xylulose 5-phosphate = pyridoxine 5'-phosphate + phosphate + 2 H2O + H(+). The protein operates within cofactor biosynthesis; pyridoxine 5'-phosphate biosynthesis; pyridoxine 5'-phosphate from D-erythrose 4-phosphate: step 5/5. Its function is as follows. Catalyzes the complicated ring closure reaction between the two acyclic compounds 1-deoxy-D-xylulose-5-phosphate (DXP) and 3-amino-2-oxopropyl phosphate (1-amino-acetone-3-phosphate or AAP) to form pyridoxine 5'-phosphate (PNP) and inorganic phosphate. This Elusimicrobium minutum (strain Pei191) protein is Pyridoxine 5'-phosphate synthase.